Consider the following 62-residue polypeptide: Protein A37.5 homolog (62 aa).

Belongs to the orthopoxviruses A37.5 protein family.

This Homo sapiens (Human) protein is Protein A37.5 homolog (A40_5R).